We begin with the raw amino-acid sequence, 876 residues long: GRB2-associated and regulator of MAPK protein 1 (876 aa).

The interval 12 to 320 is CABIT; it reads KDVKWSSVAV…HLVKGESWPE (309 aa). Tyr-105 and Tyr-453 each carry phosphotyrosine. A disordered region spans residues 496 to 572; the sequence is IPGTLGAAVK…SPSPTLSYYS (77 aa). The necessary for interaction with GRB2 stretch occupies residues 498 to 550; that stretch reads GTLGAAVKSSDTALPPPPVPPKSEAVREECRLLNAPPVPPRSAKPLSTSPSIP. Residues 558-572 show a composition bias toward polar residues; it reads RQQTRSPSPTLSYYS. 2 positions are modified to phosphoserine: Ser-610 and Ser-614. Disordered stretches follow at residues 626 to 664 and 738 to 763; these read WPNHYSGASESQTRSDFLLDPSRSYSYPRQKTPGTPKRN and ASETSPLPLKIDGAEEDPKSGSPDLS. 2 stretches are compositionally biased toward polar residues: residues 631–640 and 648–658; these read SGASESQTRS and RSYSYPRQKTP. The 66-residue stretch at 811-876 folds into the SAM domain; the sequence is LSIEEVSKSL…QFINGWRPKI (66 aa).

Belongs to the GAREM family. As to quaternary structure, isoform 1 interacts with EGFR. Isoform 1 interacts (via proline-rich domain and phosphorylated at Tyr-105 and Tyr-453) with GRB2 (via SH3 domains); the interaction occurs upon EGF stimulation. Isoform 1 interacts (phosphorylated at Tyr-453) with PTPN11; the interaction increases MAPK/ERK activity and does not affect the GRB2/SOS complex formation. Isoform 2 does not interact with GRB2. On EGF stimulation, phosphorylated on Tyr-105 and Tyr-453. Isoform 1 is ubiquitously expressed.

In terms of biological role, acts as an adapter protein that plays a role in intracellular signaling cascades triggered either by the cell surface activated epidermal growth factor receptor and/or cytoplasmic protein tyrosine kinases. Promotes activation of the MAPK/ERK signaling pathway. Plays a role in the regulation of cell proliferation. The sequence is that of GRB2-associated and regulator of MAPK protein 1 (GAREM1) from Homo sapiens (Human).